Consider the following 392-residue polypeptide: Formate-dependent phosphoribosylglycinamide formyltransferase (392 aa).

N(1)-(5-phospho-beta-D-ribosyl)glycinamide-binding positions include 20–21 and E80; that span reads EL. ATP is bound by residues R112, K153, 158-163, 193-196, and E201; these read SSGKGQ and EEFI. The 190-residue stretch at 117-306 folds into the ATP-grasp domain; sequence RLAAEELGLP…EFELHVRAIL (190 aa). E265 and E277 together coordinate Mg(2+). N(1)-(5-phospho-beta-D-ribosyl)glycinamide is bound by residues D284, K354, and 361 to 362; that span reads RR.

It belongs to the PurK/PurT family. As to quaternary structure, homodimer.

The enzyme catalyses N(1)-(5-phospho-beta-D-ribosyl)glycinamide + formate + ATP = N(2)-formyl-N(1)-(5-phospho-beta-D-ribosyl)glycinamide + ADP + phosphate + H(+). The protein operates within purine metabolism; IMP biosynthesis via de novo pathway; N(2)-formyl-N(1)-(5-phospho-D-ribosyl)glycinamide from N(1)-(5-phospho-D-ribosyl)glycinamide (formate route): step 1/1. In terms of biological role, involved in the de novo purine biosynthesis. Catalyzes the transfer of formate to 5-phospho-ribosyl-glycinamide (GAR), producing 5-phospho-ribosyl-N-formylglycinamide (FGAR). Formate is provided by PurU via hydrolysis of 10-formyl-tetrahydrofolate. This Geobacter metallireducens (strain ATCC 53774 / DSM 7210 / GS-15) protein is Formate-dependent phosphoribosylglycinamide formyltransferase.